The chain runs to 151 residues: Cell division protein SepF (151 aa).

The protein belongs to the SepF family. Homodimer. Interacts with FtsZ.

The protein resides in the cytoplasm. Cell division protein that is part of the divisome complex and is recruited early to the Z-ring. Probably stimulates Z-ring formation, perhaps through the cross-linking of FtsZ protofilaments. Its function overlaps with FtsA. In Desulfitobacterium hafniense (strain Y51), this protein is Cell division protein SepF.